The chain runs to 253 residues: Tetraspanin-11 (253 aa).

The next 3 helical transmembrane spans lie at 19–39 (LLFV…AVGI), 63–83 (ILIF…GAIL), and 93–113 (YFCL…LAHV). Residue Asn127 is glycosylated (N-linked (GlcNAc...) asparagine). Residues 220–240 (LLLMGAVGIGVACLQICGMVL) traverse the membrane as a helical segment.

It belongs to the tetraspanin (TM4SF) family.

It localises to the membrane. This Homo sapiens (Human) protein is Tetraspanin-11 (TSPAN11).